Consider the following 542-residue polypeptide: Serine/threonine-protein phosphatase 2A regulatory subunit pptr-1 (542 aa).

Disordered stretches follow at residues 1 to 28 (MHGS…TGGQ) and 500 to 542 (DYLK…PAKK). The segment covering 528 to 542 (KKSSTGSETTTPAKK) has biased composition (polar residues).

Belongs to the phosphatase 2A regulatory subunit B56 family. Part of a complex consisting of a common heterodimeric core enzyme, composed of catalytic subunit let-92 and constant regulatory subunit paa-1, that associates with a variety of regulatory subunits which confer distinct properties to the holoenzyme. Interacts with akt-1 but not akt-2. Interacts with sgk-1. Interacts with P granule components meg-1, meg-3 and meg-4. As to expression, expressed in pharynx, vulva and spermatheca.

Its subcellular location is the cytoplasm. Functionally, probable regulatory subunit of serine/threonine-protein phosphatase let-92 which negatively regulates the insulin receptor signaling cascade composed of daf-2, age-1, akt-1, akt-2 and sgk-1 by promoting the dephosphorylation of akt-1 on 'Thr-350'. Negatively regulates several functions controlled by the insulin pathway including dauer formation, lifespan, fat storage and stress resistance. Plays a role in the asymmetric segregation of the P granule components during embryonic cell divisions but does not play an essential role in specifying germ cell fate. Within a PP2A phosphatase complex, acts redundantly with pptr-2, to dephosphorylate P granule components including meg-1 and meg-3 to promote the assembly and accumulation of zygotic P granules in the posterior cytoplasm during zygote polarization, and thus maintain P granule distribution and segregation in early stage embryos following meiosis. In adults, required to promote germ cell proliferation and differentiation when exposed to thermic stress. The protein is Serine/threonine-protein phosphatase 2A regulatory subunit pptr-1 of Caenorhabditis elegans.